We begin with the raw amino-acid sequence, 389 residues long: Large envelope protein (389 aa).

Met1 bears the N-acetylmethionine mark. The N-myristoyl glycine; by host moiety is linked to residue Gly2. A pre-S1 region spans residues 2–108 (GTNLSVPNPL…PPLRDSHPQA (107 aa)). Positions 2 to 163 (GTNLSVPNPL…SARTGDPVTI (162 aa)) are pre-S. Topologically, residues 2–170 (GTNLSVPNPL…VTIMENITSG (169 aa)) are virion surface; in external conformation. The Intravirion; in internal conformation portion of the chain corresponds to 2-242 (GTNLSVPNPL…PGYRWMCLRR (241 aa)). Residues 77-95 (VSTIPPPASTNRQSGRQPT) are compositionally biased toward polar residues. Residues 77 to 103 (VSTIPPPASTNRQSGRQPTPISPPLRD) are disordered. Residues 109-163 (MQWNSTALHQALQDPRVRGLYLPAGGSSSGTVNPAPNIASHISSISARTGDPVTI) are pre-S2. Residues 171–191 (FLGPLLVLQAGFFLLTRILTI) form a helical membrane-spanning segment. At 192-242 (PQSLDSWWTSLNFLGGSPVCLGQNSQSPTSNHSPTSCPPICPGYRWMCLRR) the chain is on the intravirion; in external conformation side. A helical membrane pass occupies residues 243 to 263 (FIIFLFILLLCLIFLLVLLDY). The Virion surface segment spans residues 264 to 337 (QGMLPVCPLI…WASVRFSWLS (74 aa)). Asn309 carries N-linked (GlcNAc...) asparagine; by host glycosylation. Residues 338–358 (LLVPFVQWFVGLSPTVWLSAI) form a helical membrane-spanning segment. The Intravirion portion of the chain corresponds to 359–364 (WMMWYW). A helical membrane pass occupies residues 365–387 (GPSLYSIVSPFIPLLPIFFCLWV). Topologically, residues 388-389 (YI) are virion surface.

It belongs to the orthohepadnavirus major surface antigen family. In its internal form (Li-HBsAg), interacts with the capsid protein and with the isoform S. Interacts with host chaperone CANX. In terms of assembly, associates with host chaperone CANX through its pre-S2 N glycan; this association may be essential for isoform M proper secretion. As to quaternary structure, interacts with isoform L. Interacts with the antigens of satellite virus HDV (HDVAgs); this interaction is required for encapsidation of HDV genomic RNA. Isoform M is N-terminally acetylated by host at a ratio of 90%, and N-glycosylated by host at the pre-S2 region. Post-translationally, myristoylated.

Its subcellular location is the virion membrane. Its function is as follows. The large envelope protein exists in two topological conformations, one which is termed 'external' or Le-HBsAg and the other 'internal' or Li-HBsAg. In its external conformation the protein attaches the virus to cell receptors and thereby initiating infection. This interaction determines the species specificity and liver tropism. This attachment induces virion internalization predominantly through caveolin-mediated endocytosis. The large envelope protein also assures fusion between virion membrane and endosomal membrane. In its internal conformation the protein plays a role in virion morphogenesis and mediates the contact with the nucleocapsid like a matrix protein. In terms of biological role, the middle envelope protein plays an important role in the budding of the virion. It is involved in the induction of budding in a nucleocapsid independent way. In this process the majority of envelope proteins bud to form subviral lipoprotein particles of 22 nm of diameter that do not contain a nucleocapsid. This Hepatitis B virus genotype A2 subtype adw (isolate Japan/Nishioka/1983) (HBV-A) protein is Large envelope protein.